Reading from the N-terminus, the 419-residue chain is uncharacterized protein (419 aa).

It belongs to the MT-A70-like family.

It is found in the cytoplasm. This is an uncharacterized protein from Schizosaccharomyces pombe (strain 972 / ATCC 24843) (Fission yeast).